We begin with the raw amino-acid sequence, 96 residues long: Large ribosomal subunit protein eL14 (96 aa).

It belongs to the eukaryotic ribosomal protein eL14 family.

This is Large ribosomal subunit protein eL14 from Desulfurococcus amylolyticus (strain DSM 18924 / JCM 16383 / VKM B-2413 / 1221n) (Desulfurococcus kamchatkensis).